The primary structure comprises 847 residues: Nitrite reductase (NADH) large subunit (847 aa).

FAD is bound at residue 44 to 79 (YDRVHLSSYFSHHTAEELSLVREGFYEKHGIKVLVG). Residue 193 to 225 (LRRKIESMGVRVHTSKNTLEIVQEGVEARKTMR) coordinates NAD(+). Cys425, Cys427, Cys459, and Cys462 together coordinate [2Fe-2S] cluster. [4Fe-4S] cluster contacts are provided by Cys641, Cys647, Cys681, and Cys685. Cys685 serves as a coordination point for siroheme.

Belongs to the nitrite and sulfite reductase 4Fe-4S domain family. Homodimer which associates with NirD. Requires siroheme as cofactor. It depends on [2Fe-2S] cluster as a cofactor. [4Fe-4S] cluster is required as a cofactor. The cofactor is FAD.

It carries out the reaction NH4(+) + 3 NAD(+) + 2 H2O = nitrite + 3 NADH + 5 H(+). It participates in nitrogen metabolism; nitrate reduction (assimilation). This is Nitrite reductase (NADH) large subunit (nirB) from Escherichia coli (strain K12).